The sequence spans 245 residues: PF03932 family protein CutC (245 aa).

Belongs to the CutC family.

Its subcellular location is the cytoplasm. The protein is PF03932 family protein CutC of Rhizobium meliloti (strain 1021) (Ensifer meliloti).